The following is a 632-amino-acid chain: Protein NSP-INTERACTING KINASE 3 (632 aa).

Positions 1–25 (MEGVRFVVWRLGFLVFVWFFDISSA) are cleaved as a signal peptide. Residues 26 to 238 (TLSPTGVNYE…GTRTNGHHVA (213 aa)) lie on the Extracellular side of the membrane. The N-linked (GlcNAc...) asparagine glycan is linked to Asn96. LRR repeat units lie at residues 97–121 (LTYL…IGRL), 122–145 (EKLQ…LGEL), 147–168 (NLNY…SLSK), and 169–193 (IEGL…SART). N-linked (GlcNAc...) asparagine glycosylation is found at Asn131, Asn155, Asn181, and Asn210. The helical transmembrane segment at 239 to 259 (LAFAASFSAAFFVFFTSGMFL) threads the bilayer. Topologically, residues 260 to 632 (WWRYRRNKQI…VEAIELSGPR (373 aa)) are cytoplasmic. The residue at position 298 (Thr298) is a Phosphothreonine. The Protein kinase domain maps to 301-584 (FNSKNILGRG…EGDGLAERWE (284 aa)). 307 to 315 (LGRGGYGIV) contributes to the ATP binding site. Thr324 is subject to Phosphothreonine. Lys329 lines the ATP pocket. Residues Ser382 and Ser385 each carry the phosphoserine modification. An interaction with geminivirus NSP protein region spans residues 415-495 (YLHEQCDPKI…DVFGFGILLL (81 aa)). The active-site Proton acceptor is Asp428. Residues Thr461, Thr462, and Thr467 each carry the phosphothreonine modification. Tyr475 carries the phosphotyrosine modification. A Phosphoserine modification is found at Ser477. Phosphothreonine is present on Thr478. Phosphoserine is present on Ser482. Thr557 bears the Phosphothreonine mark.

This sequence belongs to the protein kinase superfamily. Ser/Thr protein kinase family. As to quaternary structure, oligomer. Interacts with geminivirus nuclear shuttle protein (NSP). In terms of processing, autophosphorylated. As to expression, expressed in seedlings, leaves and flowers.

Its subcellular location is the cell membrane. It catalyses the reaction L-seryl-[protein] + ATP = O-phospho-L-seryl-[protein] + ADP + H(+). The enzyme catalyses L-threonyl-[protein] + ATP = O-phospho-L-threonyl-[protein] + ADP + H(+). With respect to regulation, inhibited by the viral nuclear shuttle protein (NSP) that binds to the region required for oligomerization. Involved in defense response to geminivirus infection. The polypeptide is Protein NSP-INTERACTING KINASE 3 (NIK3) (Arabidopsis thaliana (Mouse-ear cress)).